The chain runs to 284 residues: NAD kinase (284 aa).

The active-site Proton acceptor is D70. Residues 70–71 (DG), 139–140 (NE), K167, D169, L177, 180–185 (TAYNLS), and Q236 each bind NAD(+).

It belongs to the NAD kinase family. The cofactor is a divalent metal cation.

Its subcellular location is the cytoplasm. It carries out the reaction NAD(+) + ATP = ADP + NADP(+) + H(+). In terms of biological role, involved in the regulation of the intracellular balance of NAD and NADP, and is a key enzyme in the biosynthesis of NADP. Catalyzes specifically the phosphorylation on 2'-hydroxyl of the adenosine moiety of NAD to yield NADP. This chain is NAD kinase, found in Helicobacter pylori (strain G27).